The sequence spans 428 residues: Adenylosuccinate synthetase (428 aa).

GTP-binding positions include 11–17 and 39–41; these read GDEGKGK and GHT. The active-site Proton acceptor is the Asp12. Mg(2+) is bound by residues Asp12 and Gly39. IMP contacts are provided by residues 12 to 15, 37 to 40, Thr130, Arg144, Asn226, Thr241, and Arg305; these read DEGK and NAGH. Residue His40 is the Proton donor of the active site. 301 to 307 provides a ligand contact to substrate; the sequence is VTTGRKR. Residues Arg307, 333-335, and 415-417 each bind GTP; these read KLD and GTG.

It belongs to the adenylosuccinate synthetase family. Homodimer. Mg(2+) serves as cofactor.

Its subcellular location is the cytoplasm. It carries out the reaction IMP + L-aspartate + GTP = N(6)-(1,2-dicarboxyethyl)-AMP + GDP + phosphate + 2 H(+). The protein operates within purine metabolism; AMP biosynthesis via de novo pathway; AMP from IMP: step 1/2. In terms of biological role, plays an important role in the de novo pathway and in the salvage pathway of purine nucleotide biosynthesis. Catalyzes the first committed step in the biosynthesis of AMP from IMP. The protein is Adenylosuccinate synthetase of Candida tropicalis (strain ATCC MYA-3404 / T1) (Yeast).